The primary structure comprises 571 residues: Proline--tRNA ligase (571 aa).

This sequence belongs to the class-II aminoacyl-tRNA synthetase family. ProS type 1 subfamily. In terms of assembly, homodimer.

The protein localises to the cytoplasm. The enzyme catalyses tRNA(Pro) + L-proline + ATP = L-prolyl-tRNA(Pro) + AMP + diphosphate. Functionally, catalyzes the attachment of proline to tRNA(Pro) in a two-step reaction: proline is first activated by ATP to form Pro-AMP and then transferred to the acceptor end of tRNA(Pro). As ProRS can inadvertently accommodate and process non-cognate amino acids such as alanine and cysteine, to avoid such errors it has two additional distinct editing activities against alanine. One activity is designated as 'pretransfer' editing and involves the tRNA(Pro)-independent hydrolysis of activated Ala-AMP. The other activity is designated 'posttransfer' editing and involves deacylation of mischarged Ala-tRNA(Pro). The misacylated Cys-tRNA(Pro) is not edited by ProRS. The protein is Proline--tRNA ligase of Pseudomonas putida (strain ATCC 47054 / DSM 6125 / CFBP 8728 / NCIMB 11950 / KT2440).